A 581-amino-acid chain; its full sequence is MLQGWIQIALTILIIVAITPFFGRYMARVFMERRTLLDPLCDRVESLLYTFVGVKGKENMTGWQYTRAVLYSNAVIAILVFSLIAGQGVLPLNPTGIPAPSWDTTLHTTISFITNSDQQHYSGETTLSYGSQIWGLGYQMFTSAGTGLAVGIAFIRGLTGRPLGNFYVDLIRAITRILLPISIVGAIALIIAGVPETLAGPAILPTLENPNLSQAIARGPVAHFEIIKELGENGGGFFASNSAHPFENPNGFVNLVQLVAILSIPTSLIYTYGVFADNLKQARLIYLIPLGIFIGFTIITAIGEYNGNQAVNSLLGVERAVNFEGKEVRFGWAQSALYAVTTTATMCGAVIAMHDSLMPNGGFATLSNLFLQIVFGGQGTGTAYLFAYLILAVFVTGLMVGRTPEFLGRKIEKREVVLASFLILLVHPIAILIPGAIALAFPDFQGISNPGFHGLSQVIYEYASAAANNGSGFEGLGDSQPAPLAIAAGAKPTITALWWNLSACFSLLAGRYIPIAALLLLADGMSRKQPVPATTGTLRTDTGLFTSVTAGVILILGALTFLPILALGPIAEAFQITRMIG.

12 helical membrane-spanning segments follow: residues 2-22, 74-94, 135-155, 177-197, 255-275, 284-304, 332-352, 357-377, 381-401, 421-441, 501-521, and 550-570; these read LQGW…TPFF, AVIA…PLNP, GLGY…IAFI, ILLP…VPET, LVQL…YGVF, LIYL…AIGE, WAQS…AVIA, LMPN…VFGG, GTAY…LMVG, FLIL…ALAF, LSAC…LLLL, and AGVI…LGPI.

The protein belongs to the KdpA family. As to quaternary structure, the system is composed of three essential subunits: KdpA, KdpB and KdpC.

It is found in the cell inner membrane. Part of the high-affinity ATP-driven potassium transport (or Kdp) system, which catalyzes the hydrolysis of ATP coupled with the electrogenic transport of potassium into the cytoplasm. This subunit binds the periplasmic potassium ions and delivers the ions to the membrane domain of KdpB through an intramembrane tunnel. The protein is Potassium-transporting ATPase potassium-binding subunit of Microcystis aeruginosa (strain NIES-843 / IAM M-2473).